The primary structure comprises 400 residues: Elongation factor Tu (400 aa).

One can recognise a tr-type G domain in the interval 10–209; that stretch reads KPHVNVGTIG…AVDSYIPTPE (200 aa). The interval 19 to 26 is G1; it reads GHVDHGKT. 19–26 lines the GTP pocket; it reads GHVDHGKT. Residue Thr-26 participates in Mg(2+) binding. The interval 60–64 is G2; sequence GITIA. The tract at residues 81-84 is G3; sequence DCPG. Residues 81-85 and 136-139 contribute to the GTP site; these read DCPGH and NKVD. The G4 stretch occupies residues 136–139; the sequence is NKVD. Residues 174–176 form a G5 region; that stretch reads SAL.

This sequence belongs to the TRAFAC class translation factor GTPase superfamily. Classic translation factor GTPase family. EF-Tu/EF-1A subfamily. As to quaternary structure, monomer.

The protein localises to the cytoplasm. It carries out the reaction GTP + H2O = GDP + phosphate + H(+). Functionally, GTP hydrolase that promotes the GTP-dependent binding of aminoacyl-tRNA to the A-site of ribosomes during protein biosynthesis. In Moorella thermoacetica (strain ATCC 39073 / JCM 9320), this protein is Elongation factor Tu.